The following is a 305-amino-acid chain: Oligopeptide transport ATP-binding protein OppF (305 aa).

One can recognise an ABC transporter domain in the interval 6–251 (LEIKHLKQHF…PLHPYTKSLL (246 aa)). 42 to 49 (GESGCGKS) contacts ATP.

It belongs to the ABC transporter superfamily. In terms of assembly, the complex is composed of two ATP-binding proteins (OppD and OppF), two transmembrane proteins (OppB and OppC) and a solute-binding protein (OppA).

It localises to the cell membrane. It catalyses the reaction a [peptide](out) + ATP + H2O = a [peptide](in) + ADP + phosphate + H(+). Part of the ABC transporter complex OppABCDF involved in the uptake of oligopeptides. Probably responsible for energy coupling to the transport system. Required for genetic competence but not for peptide transport or for sporulation. This is Oligopeptide transport ATP-binding protein OppF from Bacillus subtilis (strain 168).